Here is a 727-residue protein sequence, read N- to C-terminus: Glycerol-3-phosphate dehydrogenase, mitochondrial (727 aa).

A mitochondrion-targeting transit peptide spans 1-42 (MAFQKAVKGTILVGGGALATVLGLSHFAHYKRKQVNLAFVEA). Position 71-99 (71-99 (DVLVIGGGATGSGCALDAVTRGLKTALVE)) interacts with FAD. Tyr-601 bears the Phosphotyrosine mark. EF-hand domains lie at 623–658 (SDID…IGVQ) and 659–694 (MDEN…IQKG). Positions 672, 674, 676, 678, and 683 each coordinate Ca(2+).

It belongs to the FAD-dependent glycerol-3-phosphate dehydrogenase family. Requires FAD as cofactor.

It is found in the mitochondrion. The catalysed reaction is a quinone + sn-glycerol 3-phosphate = dihydroxyacetone phosphate + a quinol. Its pathway is polyol metabolism; glycerol degradation via glycerol kinase pathway; glycerone phosphate from sn-glycerol 3-phosphate (aerobic route): step 1/1. With respect to regulation, calcium-binding enhance the activity of the enzyme. Functionally, calcium-responsive mitochondrial glycerol-3-phosphate dehydrogenase which seems to be a key component of the pancreatic beta-cell glucose-sensing device. The sequence is that of Glycerol-3-phosphate dehydrogenase, mitochondrial (GPD2) from Bos taurus (Bovine).